The primary structure comprises 384 residues: Ribosomal RNA large subunit methyltransferase G (384 aa).

This sequence belongs to the methyltransferase superfamily. RlmG family.

The protein localises to the cytoplasm. It carries out the reaction guanosine(1835) in 23S rRNA + S-adenosyl-L-methionine = N(2)-methylguanosine(1835) in 23S rRNA + S-adenosyl-L-homocysteine + H(+). In terms of biological role, specifically methylates the guanine in position 1835 (m2G1835) of 23S rRNA. The sequence is that of Ribosomal RNA large subunit methyltransferase G from Streptomyces griseus subsp. griseus (strain JCM 4626 / CBS 651.72 / NBRC 13350 / KCC S-0626 / ISP 5235).